A 388-amino-acid polypeptide reads, in one-letter code: Chorismate synthase (388 aa).

Positions 39 and 45 each coordinate NADP(+). FMN is bound by residues 130 to 132 (RSS), 251 to 252 (NA), glycine 296, 311 to 315 (KPIPT), and arginine 337.

The protein belongs to the chorismate synthase family. Homotetramer. Requires FMNH2 as cofactor.

It carries out the reaction 5-O-(1-carboxyvinyl)-3-phosphoshikimate = chorismate + phosphate. It participates in metabolic intermediate biosynthesis; chorismate biosynthesis; chorismate from D-erythrose 4-phosphate and phosphoenolpyruvate: step 7/7. Its function is as follows. Catalyzes the anti-1,4-elimination of the C-3 phosphate and the C-6 proR hydrogen from 5-enolpyruvylshikimate-3-phosphate (EPSP) to yield chorismate, which is the branch point compound that serves as the starting substrate for the three terminal pathways of aromatic amino acid biosynthesis. This reaction introduces a second double bond into the aromatic ring system. The protein is Chorismate synthase of Geobacillus kaustophilus (strain HTA426).